A 433-amino-acid polypeptide reads, in one-letter code: Legumain (433 aa).

The first 17 residues, 1-17, serve as a signal peptide directing secretion; sequence MVWKVAVFLSVALGIGA. Residue Asn-91 is glycosylated (N-linked (GlcNAc...) asparagine). His-148 is an active-site residue. N-linked (GlcNAc...) asparagine glycosylation occurs at Asn-167. Residue Cys-189 is the Nucleophile of the active site. 2 N-linked (GlcNAc...) asparagine glycosylation sites follow: Asn-263 and Asn-272. Positions 324-433 are excised as a propeptide; it reads DLEESRQLTE…SMDHVCLGHY (110 aa). 2 disulfides stabilise this stretch: Cys-378–Cys-412 and Cys-390–Cys-429.

The protein belongs to the peptidase C13 family. In terms of assembly, homodimer before autocatalytic removal of the propeptide. Monomer after autocatalytic processing. May interact with integrins. Post-translationally, activated by autocatalytic processing at pH 4. In terms of tissue distribution, ubiquitous. Particularly abundant in kidney, heart and placenta.

Its subcellular location is the lysosome. It carries out the reaction Hydrolysis of proteins and small molecule substrates at -Asn-|-Xaa- bonds.. Its activity is regulated as follows. Inhibited by CST6. Its function is as follows. Has a strict specificity for hydrolysis of asparaginyl bonds. Can also cleave aspartyl bonds slowly, especially under acidic conditions. Involved in the processing of proteins for MHC class II antigen presentation in the lysosomal/endosomal system. Also involved in MHC class I antigen presentation in cross-presenting dendritic cells by mediating cleavage and maturation of Perforin-2 (MPEG1), thereby promoting antigen translocation in the cytosol. Required for normal lysosomal protein degradation in renal proximal tubules. Required for normal degradation of internalized EGFR. Plays a role in the regulation of cell proliferation via its role in EGFR degradation. In Homo sapiens (Human), this protein is Legumain.